A 303-amino-acid chain; its full sequence is Phytochrome-associated serine/threonine-protein phosphatase 3 (303 aa).

Positions 50, 52, 78, and 110 each coordinate Zn(2+). The active-site Proton donor is the histidine 111. Positions 160 and 234 each coordinate Zn(2+).

It belongs to the PPP phosphatase family. PP-6 (PP-V) subfamily. Interacts with PHYA and PHYB, mostly when they are phosphorylated and in Pfr forms. Interacts with TAP46. Interacts with NRP. Interacts with PIN1 and PIN2. Interacts with ABI5. Interacts with PIF3 and PIF4. Protein phosphatase 6 (PP6) holoenzyme is a heterotrimeric complex formed by the catalytic subunit FYPP, a SAPS domain-containing subunit (SAL) and a protein phosphatase 2A regulatory subunit A (PP2AA). Zn(2+) serves as cofactor. As to expression, mostly expressed in flowers. Also detected to a lower extent in stems and leaves. Expressed in roots.

The protein localises to the cytoplasm. It carries out the reaction O-phospho-L-seryl-[protein] + H2O = L-seryl-[protein] + phosphate. The catalysed reaction is O-phospho-L-threonyl-[protein] + H2O = L-threonyl-[protein] + phosphate. Its function is as follows. Catalytic subunit of protein phosphatase 6 (PP6). Dephosphorylates phosphorylated phytochromes, with a preference toward Pfr forms. Plays a major role in the photoperiodic control of flowering time in long days by modulating phytochrome signals in flowering time control. Involved in the regulation of polar auxin transport in roots. Dephosphorylates directly the auxin efflux carriers PIN1 and PIN2, thus promoting their proper polar localization in root cell plasma membrane. Acts antagonistically with the protein kinase PID to regulate the reversible phosphorylation of PIN and polar targeting, subsequently impacting polar auxin transport and plant development. Involved in the regulation of abscisic acid (ABA) signaling during seed germination and postgermination seedling growth. Functions as a negative regulator of ABA signaling through direct dephosphorylation and destabilization of ABI5 protein. Acts antagonistically with the protein kinase SRK2E/SNRK2.6 to regulate ABI5 phosphorylation and ABA responses. Involved in the regulation of phosphorylation status in hypocotyl phototropism. Involved in the negative regulation of photomorphogenesis by controlling the stability and transcriptional activity of PIF3 and PIF4 proteins in the dark, via the regulation of their phosphorylation status. The sequence is that of Phytochrome-associated serine/threonine-protein phosphatase 3 from Arabidopsis thaliana (Mouse-ear cress).